A 247-amino-acid chain; its full sequence is Protein NipSnap homolog 3A (247 aa).

Lys-48 and Lys-166 each carry N6-acetyllysine.

The protein belongs to the NipSnap family.

The protein resides in the cytoplasm. Its subcellular location is the cytosol. The sequence is that of Protein NipSnap homolog 3A (NIPSNAP3A) from Pongo abelii (Sumatran orangutan).